Here is a 395-residue protein sequence, read N- to C-terminus: MRRLFTSESVTEGHPDKVADQISDAILDAMLEQDPKSRVAVETLVTTGLVIVAGEVTTRAYVEIPDIVRKTILEIGYTRAKYGFDGETCGVLTSIHSQSPDIALGVDKALEVKSGEEVADELEALGAGDQGIMFGYATNETPEYMPLPITLAHRLAMRLAEVRKKGILPFLRPDGKTQVTIEYEDDKPVRVDTVLISTQHDPDISQADLREAIIEHVINPVIPEEYRDDKMKILVNPTGRFVLGGPMADTGLTGRKIIVDTYGGWVPHGGGAFSGKDPTKVDRSAHYMARYVAKNVVAAGLADKFLIQLSYAIGVAKPVSILIDTFGTAKVDEEKLLKVITEIFDFRPGAIIKKLNLLRPIYRKTAAYGHFGRNEEEFTWEKLDMVDELKRAFNM.

His14 serves as a coordination point for ATP. Residue Asp16 participates in Mg(2+) binding. Glu42 is a K(+) binding site. 2 residues coordinate L-methionine: Glu55 and Gln98. The flexible loop stretch occupies residues 98–108 (QSPDIALGVDK). Residues 174-176 (DGK), 240-241 (RF), Asp249, 255-256 (RK), Ala272, and Lys276 each bind ATP. Position 249 (Asp249) interacts with L-methionine. L-methionine is bound at residue Lys280.

Belongs to the AdoMet synthase family. In terms of assembly, homotetramer; dimer of dimers. Mg(2+) serves as cofactor. Requires K(+) as cofactor.

It localises to the cytoplasm. It catalyses the reaction L-methionine + ATP + H2O = S-adenosyl-L-methionine + phosphate + diphosphate. It functions in the pathway amino-acid biosynthesis; S-adenosyl-L-methionine biosynthesis; S-adenosyl-L-methionine from L-methionine: step 1/1. Catalyzes the formation of S-adenosylmethionine (AdoMet) from methionine and ATP. The overall synthetic reaction is composed of two sequential steps, AdoMet formation and the subsequent tripolyphosphate hydrolysis which occurs prior to release of AdoMet from the enzyme. This is S-adenosylmethionine synthase from Thermotoga neapolitana (strain ATCC 49049 / DSM 4359 / NBRC 107923 / NS-E).